The sequence spans 268 residues: Testis-specific serine/threonine-protein kinase 3 (268 aa).

The 256-residue stretch at 10–265 (YQLGKTIGEG…IEEVSWHPWL (256 aa)) folds into the Protein kinase domain. ATP contacts are provided by residues 16 to 24 (IGEGTYSKV) and lysine 39. The Proton acceptor role is filled by aspartate 134. Serine 166 carries the phosphoserine; by autocatalysis modification. A Phosphothreonine; by PDPK1 modification is found at threonine 168.

Belongs to the protein kinase superfamily. CAMK Ser/Thr protein kinase family. Mg(2+) is required as a cofactor. It depends on Mn(2+) as a cofactor. In terms of processing, autophosphorylated at Ser-166. Phosphorylation at Thr-168 by PDPK1 activates the serine/threonine protein kinase activity. Developmentally expressed in testicular germ cells. In adult testis, expression was detected in round and condensing spermatids, but not in meiotic pachytene spermatocytes. Not expressed in brain, ovary, kidney, liver or early embryonic cells.

It localises to the cell projection. The protein localises to the cilium. Its subcellular location is the flagellum. The catalysed reaction is L-seryl-[protein] + ATP = O-phospho-L-seryl-[protein] + ADP + H(+). It carries out the reaction L-threonyl-[protein] + ATP = O-phospho-L-threonyl-[protein] + ADP + H(+). Activated by phosphorylation on Thr-168 by PDPK1. Serine/threonine protein kinase required for spermatid development and male fertility. This chain is Testis-specific serine/threonine-protein kinase 3, found in Mus musculus (Mouse).